The primary structure comprises 520 residues: Protein-export membrane protein SecD (520 aa).

6 helical membrane-spanning segments follow: residues 10 to 30 (IILL…PTLA), 364 to 384 (DSLL…FLRY), 391 to 411 (LPMI…AAGI), 417 to 437 (LSVI…LVII), 461 to 481 (FWVI…LAIL), and 483 to 503 (LGDL…GVLI).

It belongs to the SecD/SecF family. SecD subfamily. Part of the protein translocation apparatus. Forms a complex with SecF.

It is found in the cell membrane. In terms of biological role, involved in protein export. In Haloquadratum walsbyi (strain DSM 16790 / HBSQ001), this protein is Protein-export membrane protein SecD.